The primary structure comprises 563 residues: Arginine--tRNA ligase (563 aa).

The 'HIGH' region signature appears at 122–132 (PNIAKPISMGH).

This sequence belongs to the class-I aminoacyl-tRNA synthetase family. Monomer.

It localises to the cytoplasm. The enzyme catalyses tRNA(Arg) + L-arginine + ATP = L-arginyl-tRNA(Arg) + AMP + diphosphate. The polypeptide is Arginine--tRNA ligase (Enterococcus faecalis (strain ATCC 700802 / V583)).